Here is a 575-residue protein sequence, read N- to C-terminus: Alpha-(1,6)-fucosyltransferase (575 aa).

At 1–9 (MRPWTGSWR) the chain is on the cytoplasmic side. Residues 10 to 30 (WIMLILFAWGTLLFYIGGHLV) traverse the membrane as a helical; Signal-anchor for type II membrane protein segment. Over 31–575 (RDNDHPDHSS…KYPTYPEAEK (545 aa)) the chain is Lumenal. 3 disulfide bridges follow: C204–C266, C212–C230, and C218–C222. Residues 206–493 (KAKKLVCNIN…PDASANFHSL (288 aa)) enclose the GT23 domain. S278 carries the phosphoserine modification. An SH3-binding motif is present at residues 299-305 (PRPPYLP). The interval 365–366 (RR) is important for donor substrate binding. A disulfide bridge links C465 with C472. Positions 502-563 (QNAHNQIAIY…PSYKVREKIE (62 aa)) constitute an SH3 domain.

Belongs to the glycosyltransferase 23 family. In terms of processing, tyrosine phosphorylated by PKDCC/VLK.

The protein localises to the golgi apparatus. Its subcellular location is the golgi stack membrane. The catalysed reaction is N(4)-{beta-D-GlcNAc-(1-&gt;2)-alpha-D-Man-(1-&gt;3)-[beta-D-GlcNAc-(1-&gt;2)-alpha-D-Man-(1-&gt;6)]-beta-D-Man-(1-&gt;4)-beta-D-GlcNAc-(1-&gt;4)-beta-D-GlcNAc}-L-asparaginyl-[protein] + GDP-beta-L-fucose = an N(4)-{beta-D-GlcNAc-(1-&gt;2)-alpha-D-Man-(1-&gt;3)-[beta-D-GlcNAc-(1-&gt;2)-alpha-D-Man-(1-&gt;6)]-beta-D-Man-(1-&gt;4)-beta-D-GlcNAc-(1-&gt;4)-[alpha-L-Fuc-(1-&gt;6)]-beta-D-GlcNAc}-L-asparaginyl-[protein] + GDP + H(+). It participates in protein modification; protein glycosylation. Its function is as follows. Catalyzes the addition of fucose in alpha 1-6 linkage to the first GlcNAc residue, next to the peptide chains in N-glycans. The sequence is that of Alpha-(1,6)-fucosyltransferase (FUT8) from Canis lupus familiaris (Dog).